Consider the following 443-residue polypeptide: Ribosomal protein uS12 methylthiotransferase RimO (443 aa).

The region spanning 8–118 (PKVGFVSLGC…VVNAVHEVVP (111 aa)) is the MTTase N-terminal domain. The [4Fe-4S] cluster site is built by cysteine 17, cysteine 53, cysteine 82, cysteine 151, cysteine 155, and cysteine 158. The Radical SAM core domain occupies 137–375 (LTPRHYAYLK…MAHQQAISAA (239 aa)). The TRAM domain occupies 378 to 443 (QQRIGKEIEV…DEYDMWAEPI (66 aa)).

The protein belongs to the methylthiotransferase family. RimO subfamily. [4Fe-4S] cluster is required as a cofactor.

It localises to the cytoplasm. It catalyses the reaction L-aspartate(89)-[ribosomal protein uS12]-hydrogen + (sulfur carrier)-SH + AH2 + 2 S-adenosyl-L-methionine = 3-methylsulfanyl-L-aspartate(89)-[ribosomal protein uS12]-hydrogen + (sulfur carrier)-H + 5'-deoxyadenosine + L-methionine + A + S-adenosyl-L-homocysteine + 2 H(+). Functionally, catalyzes the methylthiolation of an aspartic acid residue of ribosomal protein uS12. This Pseudomonas entomophila (strain L48) protein is Ribosomal protein uS12 methylthiotransferase RimO.